Consider the following 572-residue polypeptide: MGKVILLPEEIRNKIAAGEVIERPVSVVKELVENSIDAGAKRITVEFINGGETLISVIDDGEGMTKEDAILALNRFATSKIKTEEDLYNIKTLGFRGEALASIASVSKVEVRSKTETEDGVFIKVEGGVIQEINLWQGSKGTVIKVFDLFYNVPARRKFLKSKTTETNLIVDFVKRIAMAYPEISFQLIQDGKNKFITSGNGKLEDVVSLLFDIEIHNNLIFLQRKEGNYIIEGFISKPGKLISLKSQDYFYVNRRWVRNNIILQAIKEGYKNRLLEGYFPFSIVFLTLPYHEVDVNVHPTKREIKFEKEKEVYEFVSKAIKEALDSEDKRFFSGVKALEGKEHKNHVGIKTEKELLSLPMEFEHKSENKLSEDISEYISLKSGFRIVGQIFDNYIIVETKDRVYIIDQHAAHERIRYEELKKELSLGYLQNVEILFPLVIEVSEEEKELLNKHKDLLEKFAFSWEDFGPYHIRIIRVPYEFLKFDSKSIENLFQEIISDISEKDLSKLEDKIIKSMACHSAIRSGNILVREEMEVLINLIFERKIPLTCPHGRPYIWEISKEELERYFHRR.

This sequence belongs to the DNA mismatch repair MutL/HexB family.

Its function is as follows. This protein is involved in the repair of mismatches in DNA. It is required for dam-dependent methyl-directed DNA mismatch repair. May act as a 'molecular matchmaker', a protein that promotes the formation of a stable complex between two or more DNA-binding proteins in an ATP-dependent manner without itself being part of a final effector complex. The chain is DNA mismatch repair protein MutL from Dictyoglomus turgidum (strain DSM 6724 / Z-1310).